The following is a 373-amino-acid chain: Erythronate-4-phosphate dehydrogenase (373 aa).

Substrate is bound by residues Ser45 and Thr66. 2 residues coordinate NAD(+): Asp146 and Thr173. The active site involves Arg206. NAD(+) is bound at residue Asp230. The active site involves Glu235. Catalysis depends on His252, which acts as the Proton donor. NAD(+) is bound at residue Gly255. Tyr256 contacts substrate.

The protein belongs to the D-isomer specific 2-hydroxyacid dehydrogenase family. PdxB subfamily. As to quaternary structure, homodimer.

Its subcellular location is the cytoplasm. It carries out the reaction 4-phospho-D-erythronate + NAD(+) = (R)-3-hydroxy-2-oxo-4-phosphooxybutanoate + NADH + H(+). Its pathway is cofactor biosynthesis; pyridoxine 5'-phosphate biosynthesis; pyridoxine 5'-phosphate from D-erythrose 4-phosphate: step 2/5. In terms of biological role, catalyzes the oxidation of erythronate-4-phosphate to 3-hydroxy-2-oxo-4-phosphonooxybutanoate. The sequence is that of Erythronate-4-phosphate dehydrogenase from Saccharophagus degradans (strain 2-40 / ATCC 43961 / DSM 17024).